The following is a 208-amino-acid chain: V-type ATP synthase subunit E (208 aa).

It belongs to the V-ATPase E subunit family.

Functionally, produces ATP from ADP in the presence of a proton gradient across the membrane. The polypeptide is V-type ATP synthase subunit E (Chlamydia felis (strain Fe/C-56) (Chlamydophila felis)).